The following is a 465-amino-acid chain: Lysosomal dipeptide transporter MFSD1 (465 aa).

The tract at residues 1 to 23 (MEEEDEEARALLAGGPDEADRGA) is disordered. The Dileucine internalization motif signature appears at 11–12 (LL). The next 12 membrane-spanning stretches (helical) occupy residues 39–59 (LVHR…SYFC), 83–103 (LLYA…GFLI), 113–133 (TIIF…GGIF), 135–155 (AFWL…SLAV), 170–191 (LNLV…NMNL), 213–233 (ITLM…LALA), 266–286 (LWLI…FIGL), 304–324 (AINS…GLLV), 331–351 (IIWV…LAFT), 361–381 (LLGL…AFVV), 392–412 (FMQS…GMIL), and 418–438 (LFLE…VVLL).

This sequence belongs to the major facilitator superfamily. As to quaternary structure, homodimer. Interacts with lysosomal protein GLMP (via lumenal domain); the interaction starts while both proteins are still in the endoplasmic reticulum and is required for stabilization of MFSD1 in lysosomes but has no direct effect on its targeting to lysosomes or transporter activity.

The protein resides in the lysosome membrane. The enzyme catalyses L-alpha-aminoacyl-L-arginine(out) = L-alpha-aminoacyl-L-arginine(in). It carries out the reaction L-arginyl-L-alpha-amino acid(out) = L-arginyl-L-alpha-amino acid(in). It catalyses the reaction L-arginyl-glycine(out) = L-arginyl-glycine(in). The catalysed reaction is L-alpha-aminoacyl-L-lysine(out) = L-alpha-aminoacyl-L-lysine(in). The enzyme catalyses L-aspartyl-L-lysine(out) = L-aspartyl-L-lysine(in). It carries out the reaction L-alanyl-L-lysine(out) = L-alanyl-L-lysine(in). It catalyses the reaction L-lysyl-L-alpha-amino acid(out) = L-lysyl-L-alpha-amino acid(in). The catalysed reaction is L-lysyl-L-alanine(out) = L-lysyl-L-alanine(in). The enzyme catalyses L-lysyl-L-lysine(out) = L-lysyl-L-lysine(in). It carries out the reaction L-lysyl-glycine(out) = L-lysyl-glycine(in). It catalyses the reaction L-alpha-aminoacyl-L-histidine(out) = L-alpha-aminoacyl-L-histidine(in). The catalysed reaction is L-histidyl-L-alpha-amino acid(out) = L-histidyl-L-alpha-amino acid(in). The enzyme catalyses L-histidyl-glycine(out) = L-histidyl-glycine(in). Functionally, lysosomal dipeptide uniporter that selectively exports lysine, arginine or histidine-containing dipeptides with a net positive charge from the lysosome lumen into the cytosol. Could play a role in a specific type of protein O-glycosylation indirectly regulating macrophages migration and tissue invasion. Also essential for liver homeostasis. The sequence is that of Lysosomal dipeptide transporter MFSD1 from Pongo abelii (Sumatran orangutan).